A 1024-amino-acid chain; its full sequence is Multidrug resistance protein MdtC (1024 aa).

Helical transmembrane passes span 12 to 32, 333 to 353, 360 to 380, 387 to 407, 435 to 455, 469 to 489, 528 to 548, 853 to 873, 875 to 895, 897 to 917, 953 to 973, and 984 to 1004; these read VATT…FSLL, EVER…FIFL, LIPA…MYLC, LSLM…IVVL, VLSM…MAGL, VAIG…CAWL, WVMV…ISIP, LWLI…LYES, VHPL…LLAL, LFDA…IGIV, PIIM…LSSG, and ITIV…TPVI.

It belongs to the resistance-nodulation-cell division (RND) (TC 2.A.6) family. MdtC subfamily. Part of a tripartite efflux system composed of MdtA, MdtB and MdtC. MdtC forms a heteromultimer with MdtB.

It localises to the cell inner membrane. The protein is Multidrug resistance protein MdtC of Yersinia pseudotuberculosis serotype IB (strain PB1/+).